We begin with the raw amino-acid sequence, 274 residues long: Large ribosomal subunit protein uL2cz/uL2cy (274 aa).

Disordered regions lie at residues 1-21 (MAIH…VDSQ) and 225-274 (PVDH…RRSK).

Belongs to the universal ribosomal protein uL2 family. Part of the 50S ribosomal subunit.

The protein localises to the plastid. It is found in the chloroplast. The protein is Large ribosomal subunit protein uL2cz/uL2cy (rpl2-A) of Arabidopsis thaliana (Mouse-ear cress).